We begin with the raw amino-acid sequence, 171 residues long: Co-chaperone protein HscB (171 aa).

The 73-residue stretch at 2-74 (DYFTLFGLPA…LMRAEYLLSL (73 aa)) folds into the J domain.

It belongs to the HscB family. As to quaternary structure, interacts with HscA and stimulates its ATPase activity. Interacts with IscU.

Functionally, co-chaperone involved in the maturation of iron-sulfur cluster-containing proteins. Seems to help targeting proteins to be folded toward HscA. This is Co-chaperone protein HscB from Escherichia coli (strain SMS-3-5 / SECEC).